A 306-amino-acid polypeptide reads, in one-letter code: High osmolarity signaling protein MOS1 (306 aa).

Residues 1-23 (MEHSRPYGGRKRMSLGNILGDPF) are Cytoplasmic-facing. The chain crosses the membrane as a helical span at residues 24-44 (ALATISISLLAWFITFISCVI). Over 45-67 (AQVQANKNKGLPDKDNPDGNFPP) the chain is Extracellular. A helical membrane pass occupies residues 68–88 (FAWWAVVYSLFLIVGVVIVVA). The Cytoplasmic portion of the chain corresponds to 89-96 (SDAIQTYH). The helical transmembrane segment at 97–117 (VAVTGYLAGGMVLVTSGVNSL) threads the bilayer. Residues 118-126 (VYSKNGARE) lie on the Extracellular side of the membrane. Residues 127–147 (AAAAGFILLSMVVIVWIFYFG) form a helical membrane-spanning segment. Residues 148 to 306 (STPSSTPRAF…IAPSNYLILL (159 aa)) lie on the Cytoplasmic side of the membrane. The tract at residues 204-242 (FENPSPVGGASQAPTAPTMPTYGNNTMQPNNKSNDEEVL) is disordered. The segment covering 224–235 (TYGNNTMQPNNK) has biased composition (polar residues). One can recognise an SH3 domain in the interval 246-306 (DYPYQAKAIY…IAPSNYLILL (61 aa)).

This sequence belongs to the SHO1 family. As to quaternary structure, forms homooligomers.

It localises to the cell membrane. In terms of biological role, plasma membrane osmosensor that activates the high osmolarity glycerol (HOG) MAPK signaling pathway in response to high osmolarity. Affects fungal virulence. In Metarhizium robertsii (strain ARSEF 23 / ATCC MYA-3075) (Metarhizium anisopliae (strain ARSEF 23)), this protein is High osmolarity signaling protein MOS1 (MOS1).